Reading from the N-terminus, the 424-residue chain is Formyl-CoA:oxalate CoA-transferase (424 aa).

CoA is bound by residues 17–18 (QS), Arg38, 96–98 (NFA), Arg104, and 136–139 (KVYE). Residue Asp168 is the Nucleophile of the active site. 247–249 (GGQ) provides a ligand contact to substrate.

This sequence belongs to the CoA-transferase III family. Frc subfamily. Homodimer.

It carries out the reaction formyl-CoA + oxalate = oxalyl-CoA + formate. The protein operates within metabolic intermediate degradation; oxalate degradation; CO(2) and formate from oxalate: step 1/2. Involved in the catabolism of oxalate and in the adapatation to low pH via the induction of the oxalate-dependent acid tolerance response (ATR). Catalyzes the transfer of the CoA moiety from formyl-CoA to oxalate. This is Formyl-CoA:oxalate CoA-transferase from Afipia carboxidovorans (strain ATCC 49405 / DSM 1227 / KCTC 32145 / OM5) (Oligotropha carboxidovorans).